The sequence spans 65 residues: Venom protein Vn4.6 (65 aa).

Positions 1–23 (MSKIILAIFLIVLCGLIFVTVDA) are cleaved as a signal peptide.

Contains 2 disulfide bonds. As to expression, expressed by the venom gland.

The protein localises to the secreted. Endoparasitoid venom protein that interferes with the activation of host hemolymph prophenoloxidase. May act in conjunction with other venom proteins (such as Vn50), by competitive binding to the zymogen and thereby interrupting the enzyme. This Cotesia rubecula (Cabbage white butterfly parasite) protein is Venom protein Vn4.6.